Reading from the N-terminus, the 343-residue chain is MSHQTGIKANAELLKFFGKCKDGKTRVLKVSIENEELALVDHKAVKKDWEKDYDALVKPLVEDDVPCYILYRLDYKIPTGYAWLLLSWVPEAATVRQKMLYASTKATLKLEFGSSNIKEEINATTKEETTLKGYQKHKIDFSAPAPLTSREEELAEIRKSEVKTDFGIDTKQQTLGGINCPISDPTSQALIDMRRGAYNYLQFRIDLEEEKIHVVNAANIDILKLPSQIPKDHARYHLYLFKHQHEGNHLDSVVFVYSMPGYTCSIRERMMYSSCKGPFSATIEKHGIEITKKIEIDNGEELTEEFIYEELHPRKLNLRPQFSKPKGPPSRGAKRLTKPQAVE.

ADF-H domains are found at residues 4 to 139 (QTGI…KHKI) and 177 to 312 (GINC…EELH). The segment at 317-343 (NLRPQFSKPKGPPSRGAKRLTKPQAVE) is disordered.

It belongs to the actin-binding proteins ADF family. Twinfilin subfamily. As to quaternary structure, interacts with G-actin; ADP-actin form.

It is found in the cytoplasm. The protein resides in the cytoskeleton. The protein localises to the cell cortex. In terms of biological role, actin-binding protein involved in motile and morphological processes. Inhibits actin polymerization, likely by sequestering G-actin. This chain is Twinfilin (twf), found in Aedes aegypti (Yellowfever mosquito).